Here is a 1393-residue protein sequence, read N- to C-terminus: DNA-directed RNA polymerase subunit beta'' (1393 aa).

Zn(2+)-binding residues include Cys224, Cys295, Cys302, and Cys305.

Belongs to the RNA polymerase beta' chain family. RpoC2 subfamily. In terms of assembly, in plastids the minimal PEP RNA polymerase catalytic core is composed of four subunits: alpha, beta, beta', and beta''. When a (nuclear-encoded) sigma factor is associated with the core the holoenzyme is formed, which can initiate transcription. Zn(2+) is required as a cofactor.

It is found in the plastid. The protein resides in the chloroplast. The catalysed reaction is RNA(n) + a ribonucleoside 5'-triphosphate = RNA(n+1) + diphosphate. DNA-dependent RNA polymerase catalyzes the transcription of DNA into RNA using the four ribonucleoside triphosphates as substrates. This is DNA-directed RNA polymerase subunit beta'' from Manihot esculenta (Cassava).